Here is a 758-residue protein sequence, read N- to C-terminus: RNA-directed RNA polymerase catalytic subunit (758 aa).

A disordered region spans residues Ser50–Tyr82. The segment covering Trp55–Pro64 has biased composition (polar residues). 2 consecutive short sequence motifs (nuclear localization signal) follow at residues Arg187–Ile195 and Arg203–Ser216. A promoter-binding site region spans residues Arg249–Glu256. The region spanning Val286–Tyr483 is the RdRp catalytic domain.

The protein belongs to the influenza viruses polymerase PB1 family. Influenza RNA polymerase is composed of three subunits: PB1, PB2 and PA. Interacts (via N-terminus) with PA (via C-terminus). Interacts (via C-terminus) with PB2 (via N-terminus); this interaction is essential for transcription initiation. In terms of processing, phosphorylated by host PRKCA.

It is found in the host nucleus. The protein resides in the host cytoplasm. It carries out the reaction RNA(n) + a ribonucleoside 5'-triphosphate = RNA(n+1) + diphosphate. Its function is as follows. RNA-dependent RNA polymerase which is responsible for replication and transcription of virus RNA segments. The transcription of viral mRNAs occurs by a unique mechanism called cap-snatching. 5' methylated caps of cellular mRNAs are cleaved after 10-13 nucleotides by PA. In turn, these short capped RNAs are used as primers by PB1 for transcription of viral mRNAs. During virus replication, PB1 initiates RNA synthesis and copy vRNA into complementary RNA (cRNA) which in turn serves as a template for the production of more vRNAs. The polypeptide is RNA-directed RNA polymerase catalytic subunit (Influenza A virus (strain A/Chicken/Scotland/1959 H5N1)).